Reading from the N-terminus, the 263-residue chain is Transmembrane protein 176B (263 aa).

The next 4 helical transmembrane spans lie at 61-81 (LGVTQILLGLVSCALGVCLYF), 89-109 (AFGCAFWSGSVAILAGVGTIV), 121-141 (VSCLLLLACIATAAAATVLGV), and 197-217 (LFLAFCIMLTVVCILEIVVSV). Phosphoserine is present on residues Ser231, Ser240, and Ser253. The disordered stretch occupies residues 239–263 (ESERKLLDGHPAPASPAKEKIPAIL).

It belongs to the TMEM176 family. As to expression, ubiquitously expressed with higher expression in lung, liver, kidney and colon. Expressed in cerebellar granule cells.

It is found in the nucleus membrane. Its function is as follows. May play a role in the process of maturation of dendritic cells. Required for the development of cerebellar granule cells. In Mus musculus (Mouse), this protein is Transmembrane protein 176B (Tmem176b).